The chain runs to 206 residues: 3-demethoxyubiquinol 3-hydroxylase (206 aa).

Fe cation-binding residues include Glu55, Glu85, His88, Glu137, Glu169, and His172.

It belongs to the COQ7 family. Fe cation is required as a cofactor.

The protein resides in the cell membrane. The enzyme catalyses a 5-methoxy-2-methyl-3-(all-trans-polyprenyl)benzene-1,4-diol + AH2 + O2 = a 3-demethylubiquinol + A + H2O. It participates in cofactor biosynthesis; ubiquinone biosynthesis. Functionally, catalyzes the hydroxylation of 2-nonaprenyl-3-methyl-6-methoxy-1,4-benzoquinol during ubiquinone biosynthesis. The polypeptide is 3-demethoxyubiquinol 3-hydroxylase (Laribacter hongkongensis (strain HLHK9)).